Consider the following 191-residue polypeptide: Glycerol-3-phosphate acyltransferase (191 aa).

A run of 5 helical transmembrane segments spans residues 3–23 (YLIV…FILT), 51–71 (TLGY…VLYV), 78–98 (YIFI…WLKF), 108–128 (VGIL…SWAV), and 150–170 (YLIV…VLIF).

Belongs to the PlsY family. As to quaternary structure, probably interacts with PlsX.

It localises to the cell inner membrane. The enzyme catalyses an acyl phosphate + sn-glycerol 3-phosphate = a 1-acyl-sn-glycero-3-phosphate + phosphate. Its pathway is lipid metabolism; phospholipid metabolism. Functionally, catalyzes the transfer of an acyl group from acyl-phosphate (acyl-PO(4)) to glycerol-3-phosphate (G3P) to form lysophosphatidic acid (LPA). This enzyme utilizes acyl-phosphate as fatty acyl donor, but not acyl-CoA or acyl-ACP. This is Glycerol-3-phosphate acyltransferase from Pelagibacter ubique (strain HTCC1062).